The sequence spans 115 residues: uncharacterized protein (115 aa).

Residues 90-100 (THFGRPATRRR) are compositionally biased toward basic residues. The interval 90–115 (THFGRPATRRRPLGEREVNPSARSLG) is disordered.

This is an uncharacterized protein from Saccharomyces cerevisiae (strain ATCC 204508 / S288c) (Baker's yeast).